A 29-amino-acid chain; its full sequence is U1-pseudomyrmecitoxin-Pt1 subunit SS1 (29 aa).

The protein belongs to the myrmexin family. In terms of assembly, heterodimer composed of subunit SS1 and subunit LS1 (U1-PSDTX-Pt1b), and heterodimer composed of subunit SS1 and LS2 (U1-PSDTX-Pt1a); disulfide-linked. Expressed by the venom gland.

The protein localises to the secreted. This heterodimer may have anti-inflammatory properties, since the myrmexin complex (composed of 6 SS-LS heterodimers) inhibits carrageenin-induced edema in a dose-dependent manner (after subcutaneous injection into rats). This Pseudomyrmex triplarinus (Ant) protein is U1-pseudomyrmecitoxin-Pt1 subunit SS1.